We begin with the raw amino-acid sequence, 386 residues long: bHLH transcription factor RHL1 (386 aa).

The tract at residues 119-186 (FTGSLNGTQP…RRGQATDPHS (68 aa)) is disordered. Over residues 127-137 (QPQQHFQHPPQ) the composition is skewed to low complexity. Residues 138–151 (GNSNQIQGQNFGAT) show a composition bias toward polar residues. The basic motif; degenerate stretch occupies residues 180–193 (QATDPHSIAERLRR). One can recognise a bHLH domain in the interval 180–229 (QATDPHSIAERLRRERIAERMKALQELVPNANKTDKASMLDEIIDYVKFL). The helix-loop-helix motif stretch occupies residues 194-229 (ERIAERMKALQELVPNANKTDKASMLDEIIDYVKFL).

Expressed in root epidermal cells.

It localises to the nucleus. In terms of biological role, transcription factor that regulates the development of root hairs. The polypeptide is bHLH transcription factor RHL1 (Lotus japonicus (Lotus corniculatus var. japonicus)).